The sequence spans 229 residues: V-type proton ATPase subunit E (229 aa).

It belongs to the V-ATPase E subunit family. V-ATPase is a heteromultimeric enzyme composed of a peripheral catalytic V1 complex (components A to H) attached to an integral membrane V0 proton pore complex (components: a, c, c', c'' and d).

Functionally, subunit of the peripheral V1 complex of vacuolar ATPase essential for assembly or catalytic function. V-ATPase is responsible for acidifying a variety of intracellular compartments in eukaryotic cells. The sequence is that of V-type proton ATPase subunit E (VATE) from Spinacia oleracea (Spinach).